The sequence spans 261 residues: Kallikrein 1-related peptidase b8 (261 aa).

Residues 1–18 form the signal peptide; that stretch reads MRFLILFLALSLGGIDAA. A propeptide spans 19–24 (activation peptide); the sequence is PPLQSR. One can recognise a Peptidase S1 domain in the interval 25–258; it reads VVGGFNCEKN…FNSWIKDTMT (234 aa). 5 disulfides stabilise this stretch: cysteine 31–cysteine 173, cysteine 50–cysteine 66, cysteine 152–cysteine 219, cysteine 184–cysteine 198, and cysteine 209–cysteine 234. The active-site Charge relay system is the histidine 65. A glycan (N-linked (GlcNAc...) asparagine) is linked at asparagine 102. Aspartate 120 (charge relay system) is an active-site residue. Serine 213 serves as the catalytic Charge relay system.

This sequence belongs to the peptidase S1 family. Kallikrein subfamily.

It carries out the reaction Preferential cleavage of Arg-|-Xaa bonds in small molecule substrates. Highly selective action to release kallidin (lysyl-bradykinin) from kininogen involves hydrolysis of Met-|-Xaa or Leu-|-Xaa.. In terms of biological role, glandular kallikreins cleave Met-Lys and Arg-Ser bonds in kininogen to release Lys-bradykinin. The sequence is that of Kallikrein 1-related peptidase b8 (Klk1b8) from Mus musculus (Mouse).